The primary structure comprises 80 residues: Raniseptin-2 (80 aa).

The signal sequence occupies residues 1–22 (MAFLKKSLFLVLFLGIVSLSIC). The propeptide occupies 23 to 49 (EEEKRVGEEEEKQEEENEELSEEELRE). The tract at residues 27–46 (RVGEEEEKQEEENEELSEEE) is disordered. Positions 30-44 (EEEEKQEEENEELSE) are enriched in acidic residues.

This sequence belongs to the frog skin active peptide (FSAP) family. Dermaseptin subfamily. Expressed by the skin glands.

It is found in the secreted. Its function is as follows. Has antibacterial activity. The protein is Raniseptin-2 of Boana raniceps (Chaco tree frog).